A 929-amino-acid chain; its full sequence is Protein translocase subunit SecA (929 aa).

ATP-binding positions include Gln-83, 101–105 (GEGKT), and Asp-491.

Belongs to the SecA family. Monomer and homodimer. Part of the essential Sec protein translocation apparatus which comprises SecA, SecYEG and auxiliary proteins SecDF. Other proteins may also be involved.

The protein localises to the cell inner membrane. It localises to the cellular thylakoid membrane. Its subcellular location is the cytoplasm. It carries out the reaction ATP + H2O + cellular proteinSide 1 = ADP + phosphate + cellular proteinSide 2.. Part of the Sec protein translocase complex. Interacts with the SecYEG preprotein conducting channel. Has a central role in coupling the hydrolysis of ATP to the transfer of proteins into and across the cell membrane, serving as an ATP-driven molecular motor driving the stepwise translocation of polypeptide chains across the membrane. Functionally, probably participates in protein translocation into and across both the cytoplasmic and thylakoid membranes in cyanobacterial cells. The polypeptide is Protein translocase subunit SecA (Thermosynechococcus vestitus (strain NIES-2133 / IAM M-273 / BP-1)).